Reading from the N-terminus, the 100-residue chain is uncharacterized protein (100 aa).

An N-terminal signal peptide occupies residues 1-18 (MWGFLVLKARWLVTPVRT). Residues 48 to 86 (LTRGVIRVSPQERSQQNQSAPKGPTPSTRPKPRTLGPQA) are disordered. Polar residues predominate over residues 58–69 (QERSQQNQSAPK). N64 is a glycosylation site (N-linked (GlcNAc...) asparagine).

The protein localises to the secreted. This is an uncharacterized protein from Homo sapiens (Human).